The sequence spans 247 residues: LHFPL tetraspan subfamily member 4 protein (247 aa).

Helical transmembrane passes span 22 to 42, 97 to 117, 127 to 147, and 178 to 198; these read IGVL…VVFI, FFVL…SLFF, ICAW…MIFP, and ILAI…FVLG.

It belongs to the LHFP family. Interacts with GABA(A) receptor subunits. Identified in a complex of 720 kDa composed of LHFPL4, NLGN2, GABRA1, GABRB2, GABRG2 and GABRB3. Interacts with GABRB3. Interacts with GABRA2. Interacts with GABRG2. Interacts with GABRA1. Interacts with NLGN2; leading to mutual regulation of protein level and synaptic clustering.

The protein resides in the cell projection. The protein localises to the dendrite. It localises to the postsynaptic cell membrane. Its function is as follows. Plays a role in the regulation of inhibitory synapse formation and function by being involved in maintening gamma-aminobutyric acid receptors (GABAARs) clustering and their associated scaffold proteins at inhibitory synaptic sites. Acts in concert with NLGN2 to recruit or stabilize GABAARs. This chain is LHFPL tetraspan subfamily member 4 protein, found in Homo sapiens (Human).